We begin with the raw amino-acid sequence, 435 residues long: Ribosomal protein uS12 methylthiotransferase RimO (435 aa).

Residues 2-118 (KKFHIVKLGC…IVEKIENGEY (117 aa)) enclose the MTTase N-terminal domain. Residues cysteine 11, cysteine 47, cysteine 81, cysteine 150, cysteine 154, and cysteine 157 each coordinate [4Fe-4S] cluster. The region spanning 136-364 (IPDSHYAYVK…MTVQSEISKN (229 aa)) is the Radical SAM core domain. Residues 367–435 (EKYIGETLEV…EYDLEGEIVE (69 aa)) enclose the TRAM domain.

Belongs to the methylthiotransferase family. RimO subfamily. The cofactor is [4Fe-4S] cluster.

The protein resides in the cytoplasm. The enzyme catalyses L-aspartate(89)-[ribosomal protein uS12]-hydrogen + (sulfur carrier)-SH + AH2 + 2 S-adenosyl-L-methionine = 3-methylsulfanyl-L-aspartate(89)-[ribosomal protein uS12]-hydrogen + (sulfur carrier)-H + 5'-deoxyadenosine + L-methionine + A + S-adenosyl-L-homocysteine + 2 H(+). In terms of biological role, catalyzes the methylthiolation of an aspartic acid residue of ribosomal protein uS12. This chain is Ribosomal protein uS12 methylthiotransferase RimO, found in Petrotoga mobilis (strain DSM 10674 / SJ95).